The following is a 181-amino-acid chain: Large ribosomal subunit protein uL5c (181 aa).

Belongs to the universal ribosomal protein uL5 family. In terms of assembly, part of the 50S ribosomal subunit; contacts the 5S rRNA.

The protein resides in the plastid. Its subcellular location is the chloroplast. Functionally, binds 5S rRNA, forms part of the central protuberance of the 50S subunit. The protein is Large ribosomal subunit protein uL5c (rpl5) of Guillardia theta (Cryptophyte).